A 619-amino-acid chain; its full sequence is Type VI secretion system component TssF1 (619 aa).

In terms of assembly, interacts with TssA1.

Functionally, core component of the H1 type VI (H1-T6SS) secretion system that plays a role in the release of toxins targeting both eukaryotic and prokaryotic species. The chain is Type VI secretion system component TssF1 from Pseudomonas aeruginosa (strain ATCC 15692 / DSM 22644 / CIP 104116 / JCM 14847 / LMG 12228 / 1C / PRS 101 / PAO1).